The primary structure comprises 837 residues: Tuftelin-interacting protein 11 (837 aa).

2 stretches are compositionally biased toward basic and acidic residues: residues 1–13 (MSLSHLYRDGEGR) and 53–64 (VWAERDSDDERP). 3 disordered regions span residues 1-21 (MSLSHLYRDGEGRIDDDDDER), 53-72 (VWAERDSDDERPSFGGKRAR), and 85-133 (LKKG…KGFA). The segment at 1-50 (MSLSHLYRDGEGRIDDDDDERENFEITDWDLQNEFNPNRQRHWQTKEEAT) is required for interaction with DHX15. A phosphoserine mark is found at serine 2, serine 59, and serine 98. A compositionally biased stretch (acidic residues) spans 91–102 (EEAELEDSDDEE). Over residues 103-116 (KPVKQDDFPKDFGP) the composition is skewed to basic and acidic residues. Serine 144 carries the post-translational modification Phosphoserine. A G-patch domain is found at 149 to 195 (TKGIGQKLLQKMGYVPGRGLGKNAQGIINPIEAKQRKGKGAVGAYGS). The segment at 179–236 (IEAKQRKGKGAVGAYGSERTTQSMQDFPVVDSEEEAEEEFQKELSQWRKDPSGSKKKP) is disordered. Position 210 is a phosphoserine (serine 210). Over residues 217–231 (EFQKELSQWRKDPSG) the composition is skewed to basic and acidic residues. A Nuclear localization signal motif is present at residues 700–705 (VKDKFN). The tract at residues 710–734 (IMNRAVSSNVGAYMQPGARENIAYL) is required for nuclear speckle localization.

The protein belongs to the TFP11/STIP family. In terms of assembly, identified in the spliceosome C complex. Found in the Intron Large (IL) complex, a post-mRNA release spliceosomal complex containing the excised intron, U2, U5 and U6 snRNPs, and splicing factors. Interacts with TUFT1. Interacts with DHX15; indicative for a recruitment of DHX15 to the IL complex. Interacts with GCFC2.

It localises to the cytoplasm. It is found in the nucleus. In terms of biological role, involved in pre-mRNA splicing, specifically in spliceosome disassembly during late-stage splicing events. Intron turnover seems to proceed through reactions in two lariat-intron associated complexes termed Intron Large (IL) and Intron Small (IS). In cooperation with DHX15 seems to mediate the transition of the U2, U5 and U6 snRNP-containing IL complex to the snRNP-free IS complex leading to efficient debranching and turnover of excised introns. May play a role in the differentiation of ameloblasts and odontoblasts or in the forming of the enamel extracellular matrix. In Pan troglodytes (Chimpanzee), this protein is Tuftelin-interacting protein 11 (TFIP11).